The following is a 254-amino-acid chain: Aspartate/glutamate leucyltransferase (254 aa).

Belongs to the R-transferase family. Bpt subfamily.

The protein localises to the cytoplasm. The enzyme catalyses N-terminal L-glutamyl-[protein] + L-leucyl-tRNA(Leu) = N-terminal L-leucyl-L-glutamyl-[protein] + tRNA(Leu) + H(+). The catalysed reaction is N-terminal L-aspartyl-[protein] + L-leucyl-tRNA(Leu) = N-terminal L-leucyl-L-aspartyl-[protein] + tRNA(Leu) + H(+). Its function is as follows. Functions in the N-end rule pathway of protein degradation where it conjugates Leu from its aminoacyl-tRNA to the N-termini of proteins containing an N-terminal aspartate or glutamate. The chain is Aspartate/glutamate leucyltransferase from Mesorhizobium japonicum (strain LMG 29417 / CECT 9101 / MAFF 303099) (Mesorhizobium loti (strain MAFF 303099)).